The chain runs to 368 residues: Peptide chain release factor 2 (368 aa).

Position 248 is an N5-methylglutamine (Gln248).

The protein belongs to the prokaryotic/mitochondrial release factor family. In terms of processing, methylated by PrmC. Methylation increases the termination efficiency of RF2.

It is found in the cytoplasm. In terms of biological role, peptide chain release factor 2 directs the termination of translation in response to the peptide chain termination codons UGA and UAA. This is Peptide chain release factor 2 from Corynebacterium glutamicum (strain R).